A 792-amino-acid chain; its full sequence is Vicilin Car i 2.0101 (792 aa).

Positions 1 to 26 (MVTKAKIPLFLFLSALFLALVCSSLA) are cleaved as a signal peptide. Disordered regions lie at residues 132-153 (ERRE…DPRE), 182-217 (RFEE…YRQC), 240-272 (ERLE…EQRY), 302-325 (EERE…CQRR), and 350-394 (QQGR…ESGE). 2 stretches are compositionally biased toward basic and acidic residues: residues 182–200 (RFEE…RGRD) and 207–217 (PRDPREQYRQC). Basic and acidic residues predominate over residues 302 to 314 (EERERQRGRDRQD). Positions 315–325 (PQQQYHRCQRR) are enriched in low complexity. The segment covering 350–375 (QQGREWGPDQASPRRESRGREEEQQR) has biased composition (basic and acidic residues). Y379 serves as a coordination point for Cu cation. Cupin type-1 domains are found at residues 384–537 (QGLR…DRLE) and 582–754 (ISLK…EEIE). C652, H654, and H698 together coordinate Cu cation. Positions 727–754 (LAGQNNIINQLEREAKELSFNMPREEIE) form a coiled coil.

This sequence belongs to the 7S seed storage protein family. As to quaternary structure, homotrimer. In terms of tissue distribution, expressed in seed (at protein level). Expressed in seed.

In terms of biological role, seed storage protein. The sequence is that of Vicilin Car i 2.0101 from Carya illinoinensis (Pecan).